The primary structure comprises 715 residues: Probable phospholipase YOR022C, mitochondrial (715 aa).

A mitochondrion-targeting transit peptide spans 1–22 (MLRFTHRGLPSSTRFRNIFVRL). 3 disordered regions span residues 161–180 (YPVDKENEGEQKNGSSNKDE), 242–268 (TSTSFKAAKTPQTEVADGSNSSKSRSI), and 311–340 (YNNADNSQGANASSKIEDGKNSGASDRQIR). Residues 242-251 (TSTSFKAAKT) show a composition bias toward low complexity. Polar residues predominate over residues 311–324 (YNNADNSQGANASS). Residue serine 501 is part of the active site. Residues 519-700 (LEFQVDNLFF…AAFILKEILS (182 aa)) enclose the DDHD domain.

It belongs to the PA-PLA1 family.

It localises to the mitochondrion. Its function is as follows. Probable phospholipase that hydrolyzes phosphatidic acid. In Saccharomyces cerevisiae (strain ATCC 204508 / S288c) (Baker's yeast), this protein is Probable phospholipase YOR022C, mitochondrial.